The primary structure comprises 182 residues: MSNQAVANRYAYALFQLAEEKSILSQVVQEMELVKEVVNTTPEFLQLLSHPKVTTEKKRAFIENSFKDSLSETSLHTLLLLVENKRIESLVDMIDSFKEMSYEAQDMAEAVVYSAKPLTSEEQAQIAVIFAKKVNKAKLLVTNVVNKDLLGGLKIRIGDRIYDGSVKSQLDRLERQLIAGTR.

The protein belongs to the ATPase delta chain family. As to quaternary structure, F-type ATPases have 2 components, F(1) - the catalytic core - and F(0) - the membrane proton channel. F(1) has five subunits: alpha(3), beta(3), gamma(1), delta(1), epsilon(1). F(0) has three main subunits: a(1), b(2) and c(10-14). The alpha and beta chains form an alternating ring which encloses part of the gamma chain. F(1) is attached to F(0) by a central stalk formed by the gamma and epsilon chains, while a peripheral stalk is formed by the delta and b chains.

The protein localises to the cell membrane. In terms of biological role, f(1)F(0) ATP synthase produces ATP from ADP in the presence of a proton or sodium gradient. F-type ATPases consist of two structural domains, F(1) containing the extramembraneous catalytic core and F(0) containing the membrane proton channel, linked together by a central stalk and a peripheral stalk. During catalysis, ATP synthesis in the catalytic domain of F(1) is coupled via a rotary mechanism of the central stalk subunits to proton translocation. Its function is as follows. This protein is part of the stalk that links CF(0) to CF(1). It either transmits conformational changes from CF(0) to CF(1) or is implicated in proton conduction. The chain is ATP synthase subunit delta from Alkalihalophilus pseudofirmus (strain ATCC BAA-2126 / JCM 17055 / OF4) (Bacillus pseudofirmus).